A 564-amino-acid chain; its full sequence is Proline--tRNA ligase (564 aa).

It belongs to the class-II aminoacyl-tRNA synthetase family. ProS type 1 subfamily. Homodimer.

Its subcellular location is the cytoplasm. It carries out the reaction tRNA(Pro) + L-proline + ATP = L-prolyl-tRNA(Pro) + AMP + diphosphate. Catalyzes the attachment of proline to tRNA(Pro) in a two-step reaction: proline is first activated by ATP to form Pro-AMP and then transferred to the acceptor end of tRNA(Pro). As ProRS can inadvertently accommodate and process non-cognate amino acids such as alanine and cysteine, to avoid such errors it has two additional distinct editing activities against alanine. One activity is designated as 'pretransfer' editing and involves the tRNA(Pro)-independent hydrolysis of activated Ala-AMP. The other activity is designated 'posttransfer' editing and involves deacylation of mischarged Ala-tRNA(Pro). The misacylated Cys-tRNA(Pro) is not edited by ProRS. In Xylella fastidiosa (strain M12), this protein is Proline--tRNA ligase.